A 1090-amino-acid polypeptide reads, in one-letter code: ATP-dependent helicase/deoxyribonuclease subunit B (1090 aa).

ATP is bound at residue 7 to 14 (GPVGSGKS). [4Fe-4S] cluster contacts are provided by C719, C1035, C1038, and C1044.

Belongs to the helicase family. AddB/RexB type 1 subfamily. As to quaternary structure, heterodimer of AddA and AddB. The cofactor is Mg(2+). [4Fe-4S] cluster is required as a cofactor.

The heterodimer acts as both an ATP-dependent DNA helicase and an ATP-dependent, dual-direction single-stranded exonuclease. Recognizes the chi site generating a DNA molecule suitable for the initiation of homologous recombination. The AddB subunit has 5' -&gt; 3' nuclease activity but not helicase activity. This chain is ATP-dependent helicase/deoxyribonuclease subunit B, found in Carboxydothermus hydrogenoformans (strain ATCC BAA-161 / DSM 6008 / Z-2901).